The sequence spans 130 residues: Fluoride-specific ion channel FluC (130 aa).

The next 4 membrane-spanning stretches (helical) occupy residues 3 to 23, 38 to 58, 67 to 87, and 102 to 122; these read FVFLWAALGGAIGSSLRYFVG, LGTFSVNLIGCFVIGFMGHLA, FGIFFVTGVLGGFTTFSSYGL, and VSYVLGTNLLGLIGVAIGWFL. Residues G77 and T80 each coordinate Na(+).

The protein belongs to the fluoride channel Fluc/FEX (TC 1.A.43) family.

The protein resides in the cell inner membrane. It catalyses the reaction fluoride(in) = fluoride(out). Na(+) is not transported, but it plays an essential structural role and its presence is essential for fluoride channel function. In terms of biological role, fluoride-specific ion channel. Important for reducing fluoride concentration in the cell, thus reducing its toxicity. In Helicobacter pylori (strain HPAG1), this protein is Fluoride-specific ion channel FluC.